An 887-amino-acid chain; its full sequence is Leucine--tRNA ligase (887 aa).

A 'HIGH' region motif is present at residues 48 to 58; that stretch reads PYPSGKLHMGH. The 'KMSKS' region signature appears at 644 to 648; it reads TMSKS. ATP is bound at residue lysine 647.

Belongs to the class-I aminoacyl-tRNA synthetase family.

The protein localises to the cytoplasm. It carries out the reaction tRNA(Leu) + L-leucine + ATP = L-leucyl-tRNA(Leu) + AMP + diphosphate. The chain is Leucine--tRNA ligase from Leptothrix cholodnii (strain ATCC 51168 / LMG 8142 / SP-6) (Leptothrix discophora (strain SP-6)).